Reading from the N-terminus, the 529-residue chain is MIKKVPIVLSIFCFLLLLSSSHGSIPEAFLNCISNKFSLDVSILNILHVPSNSSYDSVLKSTIQNPRFLKSPKPLAIITPVLHSHVQSAVICTKQAGLQIRIRSGGADYEGLSYRSEVPFILLDLQNLRSISVDIEDNSAWVESGATIGEFYHEIAQNSPVHAFPAGVSSSVGIGGHLSSGGFGTLLRKYGLAADNIIDAKIVDARGRILDRESMGEDLFWAIRGGGGASFGVIVSWKVKLVKVPPMVTVFILSKTYEEGGLDLLHKWQYIEHKLPEDLFLAVSIMDDSSSGNKTLMAGFMSLFLGKTEDLLKVMAENFPQLGLKKEDCLEMNWIDAAMYFSGHPIGESRSVLKNRESHLPKTCVSIKSDFIQEPQSMDALEKLWKFCREEENSPIILMLPLGGMMSKISESEIPFPYRKDVIYSMIYEIVWNCEDDESSEEYIDGLGRLEELMTPYVKQPRGSWFSTRNLYTGKNKGPGTTYSKAKEWGFRYFNNNFKKLALIKGQVDPENFFYYEQSIPPLHLQVEL.

An N-terminal signal peptide occupies residues 1-23 (MIKKVPIVLSIFCFLLLLSSSHG). A disulfide bridge connects residues Cys-32 and Cys-92. A glycan (N-linked (GlcNAc...) asparagine) is linked at Asn-52. An FAD-binding PCMH-type domain is found at 70-244 (KSPKPLAIIT…VSWKVKLVKV (175 aa)). Residues 102 to 108 (IRSGGAD), Ser-113, 168 to 169 (VS), 173 to 177 (GIGGH), and Phe-183 each bind FAD. Residue Asn-293 is glycosylated (N-linked (GlcNAc...) asparagine). Trp-465 contacts FAD.

The protein belongs to the oxygen-dependent FAD-linked oxidoreductase family. The cofactor is FAD. In terms of tissue distribution, expressed in leaf epidermis.

It is found in the endoplasmic reticulum. Its subcellular location is the vacuole. The protein localises to the vesicle. It carries out the reaction O-acetyl-15alpha-stemmadenine + O2 = precondylocarpine acetate + H2O2. It functions in the pathway alkaloid biosynthesis. Functionally, component of the seco-iridoid and derivatives monoterpenoid indole alkaloids (MIAs, e.g. vinblastine, catharanthine, tabersonine, vincadifformine, vindoline, vincristine, quinine and strychnine) biosynthesis pathway. Converts O-acetylstemmadenine (OAS) to reactive acetylated intermediates, likely dihydroprecondylocarpine acetate. In Catharanthus roseus (Madagascar periwinkle), this protein is O-acetylstemmadenine oxidase.